We begin with the raw amino-acid sequence, 36 residues long: Photosystem I reaction center subunit VIII (36 aa).

The helical transmembrane segment at 6–26 threads the bilayer; the sequence is LPSIFVPLVGLVFPAIAMASL.

Belongs to the PsaI family.

The protein localises to the plastid. It is found in the chloroplast thylakoid membrane. In terms of biological role, may help in the organization of the PsaL subunit. This is Photosystem I reaction center subunit VIII from Drimys granadensis.